The primary structure comprises 264 residues: Alkaline ceramidase 1 (264 aa).

The Lumenal portion of the chain corresponds to 1–27 (MPSIFAYQSSEVDWCESNFQYSELVAE). Ca(2+) contacts are provided by aspartate 13, tryptophan 14, glutamate 16, asparagine 18, and glutamate 27. Residues 28-48 (FYNTFSNIPFFIFGPLMMLLM) traverse the membrane as a helical segment. The Cytoplasmic segment spans residues 49–57 (HPYAQKRSR). Residues 58–78 (YIYVVWVLFMIIGLFSMYFHM) form a helical membrane-spanning segment. Histidine 77 serves as a coordination point for Zn(2+). Topologically, residues 79–81 (TLS) are lumenal. A helical transmembrane segment spans residues 82 to 102 (FLGQLLDEIAILWLLGSGYSI). Residues 103–119 (WMPRCYFPSFLGGNRSQ) lie on the Cytoplasmic side of the membrane. The chain crosses the membrane as a helical span at residues 120–137 (FIRLVFITTVVSTLLSFL). Arginine 138 is a topological domain (lumenal). Residues 139–159 (PTVNAYALNSIALHILYIVCQ) traverse the membrane as a helical segment. Over 160–176 (EYRKTSNKELRHLIEVS) the chain is Cytoplasmic. Residues 177–197 (VVLWAVALTSWISDRLLCSFW) traverse the membrane as a helical segment. The Lumenal portion of the chain corresponds to 198–206 (QRIHFFYLH). Histidine 206 and histidine 210 together coordinate Zn(2+). A helical membrane pass occupies residues 207 to 227 (SIWHVLISITFPYGMVTMALV). Over 228-264 (DANYEMPGETLKVRYWPRDSWPVGLPYVEIRGDDKDC) the chain is Cytoplasmic.

This sequence belongs to the alkaline ceramidase family. Zn(2+) is required as a cofactor. As to expression, mainly expressed in epidermis.

Its subcellular location is the endoplasmic reticulum membrane. The enzyme catalyses an N-acylsphing-4-enine + H2O = sphing-4-enine + a fatty acid. The catalysed reaction is N-tetracosanoyl-sphing-4-enine + H2O = tetracosanoate + sphing-4-enine. It catalyses the reaction an N-acylsphinganine + H2O = sphinganine + a fatty acid. It carries out the reaction N-(9Z-octadecenoyl)-sphing-4-enine + H2O = sphing-4-enine + (9Z)-octadecenoate. The enzyme catalyses N-(15Z-tetracosenoyl)-sphing-4-enine + H2O = (15Z)-tetracosenoate + sphing-4-enine. It functions in the pathway lipid metabolism; sphingolipid metabolism. With respect to regulation, inhibited by sphingosine. Activity is Ca(2+)-dependent. Endoplasmic reticulum ceramidase that catalyzes the hydrolysis of ceramides into sphingosine and free fatty acids at alkaline pH. Ceramides, sphingosine, and its phosphorylated form sphingosine-1-phosphate are bioactive lipids that mediate cellular signaling pathways regulating several biological processes including cell proliferation, apoptosis and differentiation. Exhibits a strong substrate specificity towards the natural stereoisomer of ceramides with D-erythro-sphingosine as a backbone and has a higher activity towards very long-chain unsaturated fatty acids like the C24:1-ceramide. May also hydrolyze dihydroceramides to produce dihydrosphingosine. ACER1 is a skin-specific ceramidase that regulates the levels of ceramides, sphingosine and sphingosine-1-phosphate in the epidermis, mediates the calcium-induced differentiation of epidermal keratinocytes and more generally plays an important role in skin homeostasis. The sequence is that of Alkaline ceramidase 1 from Homo sapiens (Human).